Reading from the N-terminus, the 272-residue chain is Glycosylphosphatidylinositol anchor biosynthesis protein 11 (272 aa).

Residues 21 to 31 (QSTSTTKSTPG) show a composition bias toward polar residues. The segment at 21–48 (QSTSTTKSTPGSQATESSTTTAGSSSSL) is disordered. The segment covering 32-48 (SQATESSTTTAGSSSSL) has biased composition (low complexity). 5 consecutive transmembrane segments (helical) span residues 91 to 111 (VMLNALPVVAAFQMTYALLCL), 145 to 165 (LLASVLTSIVTPFLYFAMVLF), 177 to 197 (FLCAAHLALLTLFPLFYVHGV), 215 to 235 (TFGGLVGGIVGAWLGAVPIPL), and 248 to 268 (ILCGAYGGYLLGRVLGGTLFW).

The protein belongs to the PIGF family.

The protein resides in the endoplasmic reticulum membrane. Its pathway is glycolipid biosynthesis; glycosylphosphatidylinositol-anchor biosynthesis. Functionally, acts in the GPI biosynthetic pathway between GlcNAc-PI synthesis and GPI transfer to protein. In Neurospora crassa (strain ATCC 24698 / 74-OR23-1A / CBS 708.71 / DSM 1257 / FGSC 987), this protein is Glycosylphosphatidylinositol anchor biosynthesis protein 11 (gpi-11).